The following is a 256-amino-acid chain: NAD(P)H-hydrate epimerase (256 aa).

Residues 1-18 are compositionally biased toward basic and acidic residues; sequence MADPRRDPAAESKDRPST. The tract at residues 1-21 is disordered; it reads MADPRRDPAAESKDRPSTERV. The 207-residue stretch at 23–229 folds into the YjeF N-terminal domain; it reads AYTADAVRAA…DLGLEPYLRR (207 aa). 74-78 provides a ligand contact to (6S)-NADPHX; that stretch reads DNGGD. Asparagine 75 and aspartate 135 together coordinate K(+). Residues 139-147 and aspartate 172 contribute to the (6S)-NADPHX site; that span reads GIGRLADRR. K(+) is bound at residue serine 175.

Belongs to the NnrE/AIBP family. K(+) is required as a cofactor.

The enzyme catalyses (6R)-NADHX = (6S)-NADHX. The catalysed reaction is (6R)-NADPHX = (6S)-NADPHX. Its function is as follows. Catalyzes the epimerization of the S- and R-forms of NAD(P)HX, a damaged form of NAD(P)H that is a result of enzymatic or heat-dependent hydration. This is a prerequisite for the S-specific NAD(P)H-hydrate dehydratase to allow the repair of both epimers of NAD(P)HX. In Microbacterium testaceum (strain StLB037), this protein is NAD(P)H-hydrate epimerase.